Here is a 445-residue protein sequence, read N- to C-terminus: GTPase Der (445 aa).

2 EngA-type G domains span residues 3–167 (PVIA…YAGQ) and 180–353 (IKIA…AAAM). Residues 9 to 16 (GRPNVGKS), 56 to 60 (DTGGF), 119 to 122 (NKAE), 186 to 193 (GRPNVGKS), 233 to 237 (DTAGL), and 298 to 301 (NKWD) contribute to the GTP site. A KH-like domain is found at 354–438 (AKLPTPKLTR…PLRIEFRSSN (85 aa)).

Belongs to the TRAFAC class TrmE-Era-EngA-EngB-Septin-like GTPase superfamily. EngA (Der) GTPase family. Associates with the 50S ribosomal subunit.

Its function is as follows. GTPase that plays an essential role in the late steps of ribosome biogenesis. This Burkholderia lata (strain ATCC 17760 / DSM 23089 / LMG 22485 / NCIMB 9086 / R18194 / 383) protein is GTPase Der.